The sequence spans 105 residues: Transcriptional regulator SutA (105 aa).

The segment covering 1-37 (MSEEELEQDELDGADEDDGEELAAADDGEADSSDGDE) has biased composition (acidic residues). The disordered stretch occupies residues 1–105 (MSEEELEQDE…PDSKYGSRPI (105 aa)). Basic and acidic residues-rich tracts occupy residues 59–83 (AKQK…KVQE) and 92–105 (PPKK…SRPI).

Interacts with RNA polymerase.

In terms of biological role, causes widespread changes in gene expression, and plays a direct role in the regulation of genes encoding ribosomal components. Associates with chromosomal DNA through interaction with RNA polymerase. Contributes to biofilm formation and secondary metabolite production. Important during transitions to and from the survival state. This is Transcriptional regulator SutA from Pseudomonas aeruginosa (strain UCBPP-PA14).